A 264-amino-acid polypeptide reads, in one-letter code: 3-methyl-2-oxobutanoate hydroxymethyltransferase (264 aa).

The Mg(2+) site is built by D45 and D84. Residues D45–S46, D84, and K112 each bind 3-methyl-2-oxobutanoate. A Mg(2+)-binding site is contributed by E114. The active-site Proton acceptor is E181.

The protein belongs to the PanB family. In terms of assembly, homodecamer; pentamer of dimers. Requires Mg(2+) as cofactor.

It localises to the cytoplasm. The catalysed reaction is 3-methyl-2-oxobutanoate + (6R)-5,10-methylene-5,6,7,8-tetrahydrofolate + H2O = 2-dehydropantoate + (6S)-5,6,7,8-tetrahydrofolate. It functions in the pathway cofactor biosynthesis; (R)-pantothenate biosynthesis; (R)-pantoate from 3-methyl-2-oxobutanoate: step 1/2. Its function is as follows. Catalyzes the reversible reaction in which hydroxymethyl group from 5,10-methylenetetrahydrofolate is transferred onto alpha-ketoisovalerate to form ketopantoate. This Pseudoalteromonas translucida (strain TAC 125) protein is 3-methyl-2-oxobutanoate hydroxymethyltransferase.